Here is a 426-residue protein sequence, read N- to C-terminus: Enolase (426 aa).

Q163 contacts (2R)-2-phosphoglycerate. E205 serves as the catalytic Proton donor. D242, E286, and D313 together coordinate Mg(2+). (2R)-2-phosphoglycerate contacts are provided by K338, R367, S368, and K389. The Proton acceptor role is filled by K338.

It belongs to the enolase family. The cofactor is Mg(2+).

The protein resides in the cytoplasm. It localises to the secreted. Its subcellular location is the cell surface. The enzyme catalyses (2R)-2-phosphoglycerate = phosphoenolpyruvate + H2O. It participates in carbohydrate degradation; glycolysis; pyruvate from D-glyceraldehyde 3-phosphate: step 4/5. Functionally, catalyzes the reversible conversion of 2-phosphoglycerate (2-PG) into phosphoenolpyruvate (PEP). It is essential for the degradation of carbohydrates via glycolysis. The chain is Enolase from Helicobacter acinonychis (strain Sheeba).